We begin with the raw amino-acid sequence, 466 residues long: Probable WRKY transcription factor 32 (466 aa).

Disordered regions lie at residues 1–45 (MEED…MEDL) and 140–166 (SVPT…PRTP). A compositionally biased stretch (basic and acidic residues) spans 8–38 (DEAKTYTVEKSEKVEPEKDGLSQFRDEEKSL). The WRKY 1 DNA-binding region spans 162–226 (VPRTPARDGY…NKGLHTHEPP (65 aa)). Zn(2+) is bound by residues C193, C198, H221, and H223. Residues 284-317 (HCENEAVEEPEPKRRLKKDNSQSSDSVSKPGKKN) form a disordered region. A DNA-binding region (WRKY 2) is located at residues 325–390 (GDVGICGDGY…YKGVHNHDMP (66 aa)). Zn(2+)-binding residues include C356, C361, H385, and H387. Positions 410–439 (TSMRTRTDDQVNIPTSSQCSVGRESEKQSK) are disordered. A compositionally biased stretch (polar residues) spans 419–429 (QVNIPTSSQCS).

This sequence belongs to the WRKY group I family.

It is found in the nucleus. In terms of biological role, transcription factor. Interacts specifically with the W box (5'-(T)TGAC[CT]-3'), a frequently occurring elicitor-responsive cis-acting element. The chain is Probable WRKY transcription factor 32 (WRKY32) from Arabidopsis thaliana (Mouse-ear cress).